Reading from the N-terminus, the 122-residue chain is Histone H2B, gonadal (122 aa).

The interval 1 to 31 (MPPKPSGKGQKKAGKAKGAPRTDKKRRRKRK) is disordered. Pro2 carries the post-translational modification N,N-dimethylproline. Ser109 carries O-linked (GlcNAc) serine glycosylation. Lys117 participates in a covalent cross-link: Glycyl lysine isopeptide (Lys-Gly) (interchain with G-Cter in ubiquitin).

It belongs to the histone H2B family. As to quaternary structure, the nucleosome is a histone octamer containing two molecules each of H2A, H2B, H3 and H4 assembled in one H3-H4 heterotetramer and two H2A-H2B heterodimers. The octamer wraps approximately 147 bp of DNA. Monoubiquitination of Lys-117 gives a specific tag for epigenetic transcriptional activation and is also prerequisite for histone H3 'Lys-4' and 'Lys-79' methylation. In terms of processing, glcNAcylation at Ser-109 promotes monoubiquitination of Lys-117. It fluctuates in response to extracellular glucose, and associates with transcribed genes.

The protein localises to the nucleus. It is found in the chromosome. Core component of nucleosome. Nucleosomes wrap and compact DNA into chromatin, limiting DNA accessibility to the cellular machineries which require DNA as a template. Histones thereby play a central role in transcription regulation, DNA repair, DNA replication and chromosomal stability. DNA accessibility is regulated via a complex set of post-translational modifications of histones, also called histone code, and nucleosome remodeling. The chain is Histone H2B, gonadal from Asterias rubens (Common European starfish).